The following is a 360-amino-acid chain: Snurportin-1 (360 aa).

At Met-1 the chain carries N-acetylmethionine. A disordered region spans residues 1–42 (MEELSQALASSFSVSQDLNSTAAPHPRLSQYKSKYSSLEQSE). The necessary for interaction with KPNB1 and m3G-cap U1 and U5 snRNP import receptor activity stretch occupies residues 1–65 (MEELSQALAS…LDYVNHARRL (65 aa)). The interval 1–159 (MEELSQALAS…NRFSSLLPGG (159 aa)) is necessary for interaction with XPO1. Residues 7–22 (ALASSFSVSQDLNSTA) are compositionally biased toward polar residues. One can recognise an IBB domain in the interval 11-73 (SFSVSQDLNS…RLAEDDWTGM (63 aa)). Ser-75 carries the phosphoserine modification. The segment at 127–129 (GKR) is interaction with m3G-cap structure. Positions 208–328 (MHSKLPEEEG…GMKEKLTHKA (121 aa)) are necessary for binding to the m3G-cap structure. Residues 339–360 (LSTPKLKGSSHSPDHPGCLMEN) are disordered. Ser-350 carries the phosphoserine modification.

It belongs to the snurportin family. Component of an import snRNP complex composed of KPNB1, SNUPN, SMN1 and ZNF259. Component of a nuclear export receptor complex composed of KPNB1, Ran, SNUPN and XPO1. Found in a trimeric export complex with SNUPN, Ran and XPO1. Interacts (via IBB domain) with KPNB1; the interaction is direct. Interacts with DDX20, IPO7, SMN1, SNRPB and XPO1. Interacts directly with XPO1. Its interaction with XPO1 and binding to m3G-cap U snRNPs appears to be mutually exclusive. Can form homomers.

The protein localises to the nucleus. It is found in the cytoplasm. Functionally, functions as an U snRNP-specific nuclear import adapter. Involved in the trimethylguanosine (m3G)-cap-dependent nuclear import of U snRNPs. Binds specifically to the terminal m3G-cap U snRNAs. This chain is Snurportin-1 (SNUPN), found in Homo sapiens (Human).